The sequence spans 392 residues: Succinate--CoA ligase [ADP-forming] subunit beta (392 aa).

The 240-residue stretch at 9-248 (KGLFRDYGVS…LHEEDPTEVK (240 aa)) folds into the ATP-grasp domain. ATP contacts are provided by residues Lys50, 57 to 59 (GRG), Val106, and Glu111. 2 residues coordinate Mg(2+): Asn203 and Asp217. Residues Asn268 and 325–327 (GIV) each bind substrate.

Belongs to the succinate/malate CoA ligase beta subunit family. As to quaternary structure, heterotetramer of two alpha and two beta subunits. It depends on Mg(2+) as a cofactor.

The enzyme catalyses succinate + ATP + CoA = succinyl-CoA + ADP + phosphate. It carries out the reaction GTP + succinate + CoA = succinyl-CoA + GDP + phosphate. The protein operates within carbohydrate metabolism; tricarboxylic acid cycle; succinate from succinyl-CoA (ligase route): step 1/1. Functionally, succinyl-CoA synthetase functions in the citric acid cycle (TCA), coupling the hydrolysis of succinyl-CoA to the synthesis of either ATP or GTP and thus represents the only step of substrate-level phosphorylation in the TCA. The beta subunit provides nucleotide specificity of the enzyme and binds the substrate succinate, while the binding sites for coenzyme A and phosphate are found in the alpha subunit. The protein is Succinate--CoA ligase [ADP-forming] subunit beta of Salinibacter ruber (strain DSM 13855 / M31).